The sequence spans 120 residues: MDKKRNDKDRKRFKRKMHIRKSIFGTAERPRMTVFRSNKRISVQVIDDVEGKTLAAVSTMEEALRSLKVNVESGAKVGEEIGKRLKEKNIDTVVFDRNGYLYHGVVKAVADGARKTGIKF.

This sequence belongs to the universal ribosomal protein uL18 family. Part of the 50S ribosomal subunit; part of the 5S rRNA/L5/L18/L25 subcomplex. Contacts the 5S and 23S rRNAs.

Its function is as follows. This is one of the proteins that bind and probably mediate the attachment of the 5S RNA into the large ribosomal subunit, where it forms part of the central protuberance. In Treponema denticola (strain ATCC 35405 / DSM 14222 / CIP 103919 / JCM 8153 / KCTC 15104), this protein is Large ribosomal subunit protein uL18.